A 290-amino-acid polypeptide reads, in one-letter code: Protease HtpX (290 aa).

Helical transmembrane passes span 12–32 and 42–62; these read IAVMVLISLVFSLFGFQGLLA and ALLVYSAVIGFSGSIISLLIS. Zn(2+) is bound at residue His147. Glu148 is an active-site residue. Residue His151 coordinates Zn(2+). 2 consecutive transmembrane segments (helical) span residues 162 to 182 and 197 to 217; these read LIQGVLNTFVVFLSRVIGHVV and FWIVSIISQVILGILASMIVM. Glu224 provides a ligand contact to Zn(2+).

The protein belongs to the peptidase M48B family. Zn(2+) is required as a cofactor.

It is found in the cell inner membrane. The polypeptide is Protease HtpX (Pseudoalteromonas atlantica (strain T6c / ATCC BAA-1087)).